Reading from the N-terminus, the 300-residue chain is Sulfate adenylyltransferase subunit 2 (300 aa).

The interval 281 to 300 is disordered; it reads RAIDRDEAGSMEKKKREGYF.

The protein belongs to the PAPS reductase family. CysD subfamily. Heterodimer composed of CysD, the smaller subunit, and CysN.

The enzyme catalyses sulfate + ATP + H(+) = adenosine 5'-phosphosulfate + diphosphate. The protein operates within sulfur metabolism; hydrogen sulfide biosynthesis; sulfite from sulfate: step 1/3. With CysN forms the ATP sulfurylase (ATPS) that catalyzes the adenylation of sulfate producing adenosine 5'-phosphosulfate (APS) and diphosphate, the first enzymatic step in sulfur assimilation pathway. APS synthesis involves the formation of a high-energy phosphoric-sulfuric acid anhydride bond driven by GTP hydrolysis by CysN coupled to ATP hydrolysis by CysD. This is Sulfate adenylyltransferase subunit 2 from Brucella abortus (strain 2308).